Here is a 249-residue protein sequence, read N- to C-terminus: MSGHSKWANIKHRKAAADAKKGKLFSQLSKEIIIAAKHGGGNPETNPRLRAAIERAREANMPKENIEKAIMRGTGEIPGVAYEEVTYEGYGPGGVAIMVEVVTDNKNRTAAEIRRIFTKHGGNLGEAGCVAWIFEEKGSIIIEKESVKDEDQLISDALEAGAEDVQISDDTVEVITSPESFSEVRDILKEKGYKITQAEVTKVPKNLVPVDGPDAEKVLKLMEELEDHDDVQKTYANFDIPDEILQSLS.

This sequence belongs to the TACO1 family.

Its subcellular location is the cytoplasm. This chain is Probable transcriptional regulatory protein Dtur_1615, found in Dictyoglomus turgidum (strain DSM 6724 / Z-1310).